The chain runs to 642 residues: Pheromone-processing carboxypeptidase KEX1 (642 aa).

The N-terminal stretch at 1 to 19 is a signal peptide; the sequence is MSLWLFFVQTVLLIQCALG. Residues 20-544 lie on the Lumenal side of the membrane; that stretch reads GLPNAKDYLV…HKDRHRNSDK (525 aa). An N-linked (GlcNAc...) asparagine glycan is attached at Asn-80. Residues Ser-189 and Asp-406 contribute to the active site. N-linked (GlcNAc...) asparagine glycans are attached at residues Asn-425, Asn-459, and Asn-467. His-470 is a catalytic residue. Residues 515-539 are disordered; sequence HSTGEEELSADQKQDEDENSHKDRH. A compositionally biased stretch (acidic residues) spans 519-532; it reads EEELSADQKQDEDE. A helical membrane pass occupies residues 545–565; it reads FEIAVILLVVFSITGTIAYYF. Residues 566–642 lie on the Cytoplasmic side of the membrane; sequence LRERFRKQIH…DDDSFELDNL (77 aa). The interval 609–642 is disordered; the sequence is IDEAPSTADKPAKNKSGYTKVPNTDDDSFELDNL. Over residues 632 to 642 the composition is skewed to acidic residues; the sequence is TDDDSFELDNL.

Belongs to the peptidase S10 family.

The protein localises to the golgi apparatus. It localises to the trans-Golgi network membrane. It carries out the reaction Preferential release of a C-terminal arginine or lysine residue.. Functionally, protease with a carboxypeptidase B-like function involved in the C-terminal processing of the lysine and arginine residues from protein precursors. Promotes cell fusion and is involved in the programmed cell death. The sequence is that of Pheromone-processing carboxypeptidase KEX1 (KEX1) from Kluyveromyces lactis (strain ATCC 8585 / CBS 2359 / DSM 70799 / NBRC 1267 / NRRL Y-1140 / WM37) (Yeast).